The sequence spans 132 residues: Small ribosomal subunit protein uS8 (132 aa).

Belongs to the universal ribosomal protein uS8 family. As to quaternary structure, part of the 30S ribosomal subunit. Contacts proteins S5 and S12.

One of the primary rRNA binding proteins, it binds directly to 16S rRNA central domain where it helps coordinate assembly of the platform of the 30S subunit. The protein is Small ribosomal subunit protein uS8 of Limosilactobacillus reuteri (strain DSM 20016) (Lactobacillus reuteri).